A 420-amino-acid chain; its full sequence is UDP-N-acetyl-D-mannosamine dehydrogenase (420 aa).

Residues tyrosine 13, isoleucine 14, aspartate 33, threonine 85, and threonine 126 each contribute to the NAD(+) site. Residues arginine 160, valine 161, lysine 212, asparagine 216, arginine 219, histidine 250, arginine 252, and glycine 263 each coordinate UDP-N-acetyl-alpha-D-mannosaminouronate. Residue lysine 212 is the Proton donor/acceptor of the active site. The active-site Nucleophile is the cysteine 266. UDP-N-acetyl-alpha-D-mannosaminouronate-binding residues include phenylalanine 330 and lysine 331. Residue arginine 338 participates in NAD(+) binding. Lysine 416 contributes to the UDP-N-acetyl-alpha-D-mannosaminouronate binding site.

Belongs to the UDP-glucose/GDP-mannose dehydrogenase family. WecC subfamily. Homodimer.

The enzyme catalyses UDP-N-acetyl-alpha-D-mannosamine + 2 NAD(+) + H2O = UDP-N-acetyl-alpha-D-mannosaminouronate + 2 NADH + 3 H(+). Its pathway is bacterial outer membrane biogenesis; enterobacterial common antigen biosynthesis. Catalyzes the four-electron oxidation of UDP-N-acetyl-D-mannosamine (UDP-ManNAc), reducing NAD(+) and releasing UDP-N-acetylmannosaminuronic acid (UDP-ManNAcA). The protein is UDP-N-acetyl-D-mannosamine dehydrogenase of Salmonella typhi.